The chain runs to 172 residues: Cytochrome c oxidase subunit 4 isoform 2, mitochondrial (172 aa).

A mitochondrion-targeting transit peptide spans Met-1–Thr-18. Residues Met-1 to Arg-33 are disordered. Polar residues predominate over residues Leu-16–Arg-33. The Mitochondrial matrix portion of the chain corresponds to Gln-19–Asn-101. The helical transmembrane segment at Glu-102–Tyr-127 threads the bilayer. The Mitochondrial intermembrane portion of the chain corresponds to Val-128 to Lys-172.

It belongs to the cytochrome c oxidase IV family. Component of the cytochrome c oxidase (complex IV, CIV), a multisubunit enzyme composed of 14 subunits. The complex is composed of a catalytic core of 3 subunits MT-CO1, MT-CO2 and MT-CO3, encoded in the mitochondrial DNA, and 11 supernumerary subunits COX4I, COX5A, COX5B, COX6A, COX6B, COX6C, COX7A, COX7B, COX7C, COX8 and NDUFA4, which are encoded in the nuclear genome. The complex exists as a monomer or a dimer and forms supercomplexes (SCs) in the inner mitochondrial membrane with NADH-ubiquinone oxidoreductase (complex I, CI) and ubiquinol-cytochrome c oxidoreductase (cytochrome b-c1 complex, complex III, CIII), resulting in different assemblies (supercomplex SCI(1)III(2)IV(1) and megacomplex MCI(2)III(2)IV(2)). In terms of tissue distribution, highly expressed in lung.

The protein localises to the mitochondrion inner membrane. Its pathway is energy metabolism; oxidative phosphorylation. Functionally, component of the cytochrome c oxidase, the last enzyme in the mitochondrial electron transport chain which drives oxidative phosphorylation. The respiratory chain contains 3 multisubunit complexes succinate dehydrogenase (complex II, CII), ubiquinol-cytochrome c oxidoreductase (cytochrome b-c1 complex, complex III, CIII) and cytochrome c oxidase (complex IV, CIV), that cooperate to transfer electrons derived from NADH and succinate to molecular oxygen, creating an electrochemical gradient over the inner membrane that drives transmembrane transport and the ATP synthase. Cytochrome c oxidase is the component of the respiratory chain that catalyzes the reduction of oxygen to water. Electrons originating from reduced cytochrome c in the intermembrane space (IMS) are transferred via the dinuclear copper A center (CU(A)) of subunit 2 and heme A of subunit 1 to the active site in subunit 1, a binuclear center (BNC) formed by heme A3 and copper B (CU(B)). The BNC reduces molecular oxygen to 2 water molecules using 4 electrons from cytochrome c in the IMS and 4 protons from the mitochondrial matrix. The chain is Cytochrome c oxidase subunit 4 isoform 2, mitochondrial (Cox4i2) from Rattus norvegicus (Rat).